The following is a 317-amino-acid chain: tRNA dimethylallyltransferase (317 aa).

Residue 13-20 (GPTASGKS) coordinates ATP. 15–20 (TASGKS) provides a ligand contact to substrate.

Belongs to the IPP transferase family. As to quaternary structure, monomer. Mg(2+) serves as cofactor.

It carries out the reaction adenosine(37) in tRNA + dimethylallyl diphosphate = N(6)-dimethylallyladenosine(37) in tRNA + diphosphate. Catalyzes the transfer of a dimethylallyl group onto the adenine at position 37 in tRNAs that read codons beginning with uridine, leading to the formation of N6-(dimethylallyl)adenosine (i(6)A). The polypeptide is tRNA dimethylallyltransferase (Kineococcus radiotolerans (strain ATCC BAA-149 / DSM 14245 / SRS30216)).